We begin with the raw amino-acid sequence, 341 residues long: Phenylalanine--tRNA ligase alpha subunit (341 aa).

Residue Glu256 participates in Mg(2+) binding.

It belongs to the class-II aminoacyl-tRNA synthetase family. Phe-tRNA synthetase alpha subunit type 1 subfamily. As to quaternary structure, tetramer of two alpha and two beta subunits. The cofactor is Mg(2+).

Its subcellular location is the cytoplasm. The enzyme catalyses tRNA(Phe) + L-phenylalanine + ATP = L-phenylalanyl-tRNA(Phe) + AMP + diphosphate + H(+). In Leptospira biflexa serovar Patoc (strain Patoc 1 / Ames), this protein is Phenylalanine--tRNA ligase alpha subunit.